Consider the following 1394-residue polypeptide: MKPVKHLLTTSNKSATLPALTSKKGLHNLPLSPKLKEKHNAKLIHDKIEPMVLRSPPTGESIVRYALPIPSSKTKNLLPGDEMIGKIIKHLKMVVSTLEETYGHCDQNGEEPFVKRENEELSLSIGDDMNSFLTCCSQFATQLETALKEEQNVCILHYFFFCPSFVFLKWFQWQVNQMEEISKDQTLLQAEPPEPDKTVTLSIAQIVRLLQRFEELKNRLKQRSKSSWKVMLSKTMDEENRPEAVKSCEAVAQKIEEFIEAHSTDEFKGVSATEPQTAHSMTNRFNTMLKVFENQANMLERAVNDQVLLDAEYKQIQRDFELLSEEKLVLENELQKLKDTEKIKSTNNRTKKAAKTVKKKDKGKSEDSEKKMSSEKEFKIKDLDQVQKVARLEIENKVLQEQLKQALQEAEKAKHQLNYFLSQERKLLKSEGKTETTMRVGNSQTEVKGEDSKTIPLEKETGKSLVSDSGGQKTSDKIQEYPQITAQSGRLIEKSSEKKRSSPAISDLSQILKSQDESAFLESSNEVSVAENQSNKSPSETRDESLTTVSSSKEVQDSLSVGTLAQKNETVMSPFILPPVLTESKKADVSEEQLQKKTEEQTYQAPEKSQAYSEVPDENLMVENKDSVTKVQVEQMKQTTSSMERREATLTTPQSPEDVVLVSRSQSETKNLEATGNESFHSHNDVPEENLMLEQDTKSKTEVEVKKQKSFQDNQLNTHNEVPNERLIVEHQESMSKTKLQVKKQETSTEQPLTTHDKEPDENLTLGHQDSMSKSEMQVKEQSTLKGQRITTHEEEPGKNLALEHQDSLSKLEMQIKKNEKLPREKRHSTHGEESSENPMLKHQDAVSKIQVQLEKQETSEGGRSIPDKNSMFVHQDSVSKLQMQEKKKVTPGRERRNTHIVVPNENVVSVHQDSKSKLQMQEKKQINPGVEKHKTFPFEIQKKDISLEHLLPEEKVLLSRRESQTKKLQAKVTSRKITNEAASELPNTAENLPAVYPSISDLIIRLDLNKVVETDIESLRGALGRRLLNDEFKTQPKSFPGSEIEQLTDAFGRDILKDEFKTRSKSLPETDERLRRATERGTINNAMKTQLKRKSHPETGLKHLKGVNEKDIIKDLINIQSKRHAETDKEHLADAIGRGIIKGSINAQLKGHQETDKNFFAYAIGRGVRKESIKTQLKSHPETDKEFLADAIGRGIIIGPIIRQLKSHQETDKQLLKDAIGRDIIKGPINAQLKSHQETDVEPLTNAIGSSKTIGEIKTQLRTHYDVNLFKNKDMSIQRQEGIFNRSITPSKFPTKVINLSPFENKEETYEYSSPYAIAPSKAVYRTYRASSSFSKDIHLPLLNQLHSGHSKVVTLNQKTIEFTLPSVTNTIGKPAYKVLHAAARKSVPHPYF.

Positions 308-340 (LLDAEYKQIQRDFELLSEEKLVLENELQKLKDT) form a coiled coil. Positions 345–375 (STNNRTKKAAKTVKKKDKGKSEDSEKKMSSE) are disordered. Positions 349-362 (RTKKAAKTVKKKDK) are enriched in basic residues. Residues 363-375 (GKSEDSEKKMSSE) show a composition bias toward basic and acidic residues. Positions 383 to 421 (LDQVQKVARLEIENKVLQEQLKQALQEAEKAKHQLNYFL) form a coiled coil. Disordered stretches follow at residues 431–617 (EGKT…EVPD), 634–806 (EQMK…LEHQ), and 819–842 (NEKLPREKRHSTHGEESSENPMLK). The segment covering 437–446 (TMRVGNSQTE) has biased composition (polar residues). Positions 447-462 (VKGEDSKTIPLEKETG) are enriched in basic and acidic residues. Over residues 464 to 473 (SLVSDSGGQK) the composition is skewed to polar residues. Residues 491–500 (LIEKSSEKKR) show a composition bias toward basic and acidic residues. Composition is skewed to polar residues over residues 503 to 513 (PAISDLSQILK), 521 to 538 (LESSNEVSVAENQSNKSP), and 546 to 571 (LTTVSSSKEVQDSLSVGTLAQKNETV). Residues 583 to 600 (ESKKADVSEEQLQKKTEE) are compositionally biased toward basic and acidic residues. The span at 663–679 (SRSQSETKNLEATGNES) shows a compositional bias: polar residues. Over residues 695 to 707 (QDTKSKTEVEVKK) the composition is skewed to basic and acidic residues. Residues 711–721 (FQDNQLNTHNE) are compositionally biased toward polar residues. Over residues 722–736 (VPNERLIVEHQESMS) the composition is skewed to basic and acidic residues. Residues 780–790 (KEQSTLKGQRI) show a composition bias toward polar residues. Composition is skewed to basic and acidic residues over residues 791–806 (TTHEEEPGKNLALEHQ) and 830–842 (THGEESSENPMLK).

Functionally, may play a role in tumorigenesis. This chain is Coiled-coil domain-containing protein 7 (CCDC7), found in Macaca fascicularis (Crab-eating macaque).